The following is a 151-amino-acid chain: Superoxide dismutase [Cu-Zn] (151 aa).

Residue C6 is the site of S-palmitoyl cysteine attachment. H45, H47, and H62 together coordinate Cu cation. C56 and C144 form a disulfide bridge. Zn(2+)-binding residues include H62, H70, H79, and D82. Residue H118 participates in Cu cation binding.

The protein belongs to the Cu-Zn superoxide dismutase family. As to quaternary structure, homodimer. It depends on Cu cation as a cofactor. Requires Zn(2+) as cofactor.

Its subcellular location is the cytoplasm. The protein resides in the nucleus. The enzyme catalyses 2 superoxide + 2 H(+) = H2O2 + O2. In terms of biological role, destroys radicals which are normally produced within the cells and which are toxic to biological systems. The polypeptide is Superoxide dismutase [Cu-Zn] (sod1) (Xenopus tropicalis (Western clawed frog)).